Reading from the N-terminus, the 571-residue chain is Streptolysin O (571 aa).

The first 33 residues, 1-33, serve as a signal peptide directing secretion; the sequence is MSNKKTFKKYSRVAGLLTVALIIGNLVTANAES. Disordered stretches follow at residues 32 to 56 and 81 to 108; these read ESNKQNTASTETTTTNEQPKPESSE and KEMPLESAEKEEKKSEDKKKSEEDHTEE. Low complexity predominate over residues 37–48; sequence NTASTETTTTNE. Beta stranded transmembrane passes span 260-273, 280-289, 358-367, and 375-387; these read KSQIEAALNVNSKI, IDFKSISKGE, SNDVEAAFSA, and KTNGKYSDILENS. A Conserved undecapeptide motif is present at residues 529–539; sequence ECTGLAWEWWR. Position 561 (Thr-561) is a short sequence motif, cholesterol binding.

The protein belongs to the cholesterol-dependent cytolysin family. In terms of assembly, homooligomeric pore complex of 35 to 50 subunits; when inserted in the host membrane.

The protein resides in the secreted. The protein localises to the host cell membrane. In terms of biological role, a cholesterol-dependent toxin that causes cytolysis by forming pores in cholesterol containing host membranes. After binding to target membranes, the protein undergoes a major conformation change, leading to its insertion in the host membrane and formation of an oligomeric pore complex. Cholesterol is required for binding to host membranes, membrane insertion and pore formation; cholesterol binding is mediated by a Thr-Leu pair in the C-terminus. Can be reversibly inactivated by oxidation. This chain is Streptolysin O (slo), found in Streptococcus pyogenes serotype M6 (strain ATCC BAA-946 / MGAS10394).